The following is a 501-amino-acid chain: LIM domain-containing protein HDR3 (501 aa).

Positions 33-67 are disordered; it reads GEANRRRPRVTAGEETTLWEEPVRPKKEEPPRHNN. Residues 53–67 show a composition bias toward basic and acidic residues; that stretch reads EPVRPKKEEPPRHNN. 2 consecutive UIM domains span residues 65–84 and 94–113; these read HNNEEMDHALALALADDAKN and ENDEELARAIQDSLNMNPYQ. Residues 131-191 enclose the LIM zinc-binding domain; sequence RVCGGCKHEI…KLCYKELHHP (61 aa). Positions 429–448 are disordered; that stretch reads YASSSSSSCRPPPSKKGGIS.

Interacts (via N-terminus) with GW6A (via C-terminus).

Ubiquitin receptor that functions as a positive regulator of grain size and weight. Functions in the same genetic pathway as GW6A to regulate grain size. Modulates grain size in a similar manner to GW6A, by altering cell proliferation in spikelet hulls. Interacts with and enhances the ubiquitination of GW6A. This stabilizes GW6A, delays protein degradation by the 26S proteasome and enhances GW6A histone acetyltransferase activity. The protein is LIM domain-containing protein HDR3 of Oryza sativa subsp. japonica (Rice).